The following is a 76-amino-acid chain: uncharacterized protein (76 aa).

EF-hand domains are found at residues 9–44 and 43–76; these read EMDE…LGEN and ENLT…IHIS.

The protein resides in the cytoplasm. It localises to the nucleus. This is an uncharacterized protein from Schizosaccharomyces pombe (strain 972 / ATCC 24843) (Fission yeast).